Here is a 180-residue protein sequence, read N- to C-terminus: Large ribosomal subunit protein uL5 (180 aa).

It belongs to the universal ribosomal protein uL5 family. In terms of assembly, part of the 50S ribosomal subunit; part of the 5S rRNA/L5/L18/L25 subcomplex. Contacts the 5S rRNA and the P site tRNA. Forms a bridge to the 30S subunit in the 70S ribosome.

This is one of the proteins that bind and probably mediate the attachment of the 5S RNA into the large ribosomal subunit, where it forms part of the central protuberance. In the 70S ribosome it contacts protein S13 of the 30S subunit (bridge B1b), connecting the 2 subunits; this bridge is implicated in subunit movement. Contacts the P site tRNA; the 5S rRNA and some of its associated proteins might help stabilize positioning of ribosome-bound tRNAs. The chain is Large ribosomal subunit protein uL5 from Rippkaea orientalis (strain PCC 8801 / RF-1) (Cyanothece sp. (strain PCC 8801)).